The sequence spans 99 residues: Ribosomal processing cysteine protease Prp (99 aa).

H16 (proton donor) is an active-site residue. C28 acts as the Nucleophile in catalysis.

It belongs to the Prp family. In terms of assembly, homodimer.

Functionally, an essential cysteine protease that cleaves the N-terminus from ribosomal protein bL27. The polypeptide is Ribosomal processing cysteine protease Prp (Mycoplasma genitalium (strain ATCC 33530 / DSM 19775 / NCTC 10195 / G37) (Mycoplasmoides genitalium)).